The chain runs to 277 residues: Large ribosomal subunit protein uL2 (277 aa).

Composition is skewed to basic residues over residues Arg-210–Gln-219 and Thr-259–Lys-277. The disordered stretch occupies residues Arg-210–Lys-277.

This sequence belongs to the universal ribosomal protein uL2 family. Part of the 50S ribosomal subunit. Forms a bridge to the 30S subunit in the 70S ribosome.

Its function is as follows. One of the primary rRNA binding proteins. Required for association of the 30S and 50S subunits to form the 70S ribosome, for tRNA binding and peptide bond formation. It has been suggested to have peptidyltransferase activity; this is somewhat controversial. Makes several contacts with the 16S rRNA in the 70S ribosome. The protein is Large ribosomal subunit protein uL2 of Ligilactobacillus salivarius (strain UCC118) (Lactobacillus salivarius).